A 307-amino-acid polypeptide reads, in one-letter code: MWFKNLQLHRLPAPWAVTADRMEKWLAPHAFQPGSSVEMQRVGWASPRDDGALVYSINRQMLLVFRAEKKLLPASVVNQVTKARALELEEQQGFKVGRKQLRELKEQVTDELLPRAFSIRRDTRVWIDTANGWLVIDAAAQALADDVRSLLVKSIDGLPLAGVQVARSPVAAMTDWLLSGDAPGGFTVDQDAELRSSGEGGATVRYVGHALEANDMRRHIEAGKQCMRLAMTWDDRISFVLTPSLTIKRVTPLDVIKEAADPTAQNDDERFDSDFTLMTGELARMLTSLVDILGGDRQDSVPQPAAA.

This sequence belongs to the RdgC family.

The protein localises to the cytoplasm. The protein resides in the nucleoid. In terms of biological role, may be involved in recombination. This chain is Recombination-associated protein RdgC, found in Burkholderia cenocepacia (strain ATCC BAA-245 / DSM 16553 / LMG 16656 / NCTC 13227 / J2315 / CF5610) (Burkholderia cepacia (strain J2315)).